The following is a 118-amino-acid chain: NADH-quinone oxidoreductase subunit A (118 aa).

3 consecutive transmembrane segments (helical) span residues 8–28 (ILIFFLTGFFLSIIILVLNYL), 61–81 (FMYALVFVLFDVETIFLYPWA), and 86–106 (VLGLFAFVEMVIFIGILVLGL).

It belongs to the complex I subunit 3 family. In terms of assembly, NDH-1 is composed of 14 different subunits. Subunits NuoA, H, J, K, L, M, N constitute the membrane sector of the complex.

It localises to the cell membrane. It catalyses the reaction a quinone + NADH + 5 H(+)(in) = a quinol + NAD(+) + 4 H(+)(out). Its function is as follows. NDH-1 shuttles electrons from NADH, via FMN and iron-sulfur (Fe-S) centers, to quinones in the respiratory chain. The immediate electron acceptor for the enzyme in this species is believed to be a menaquinone. Couples the redox reaction to proton translocation (for every two electrons transferred, four hydrogen ions are translocated across the cytoplasmic membrane), and thus conserves the redox energy in a proton gradient. The polypeptide is NADH-quinone oxidoreductase subunit A (Carboxydothermus hydrogenoformans (strain ATCC BAA-161 / DSM 6008 / Z-2901)).